The sequence spans 207 residues: Germin-like protein 1 (207 aa).

A signal peptide spans Met-1–Asp-17. An intrachain disulfide couples Cys-23 to Cys-38. Residues Phe-51 to Lys-197 form the Cupin type-1 domain. The N-linked (GlcNAc...) asparagine glycan is linked to Asn-58. Mn(2+) contacts are provided by His-99, His-101, Glu-106, and His-145.

Belongs to the germin family. As to quaternary structure, oligomer (believed to be a pentamer but probably hexamer).

It localises to the secreted. The protein localises to the extracellular space. Its subcellular location is the apoplast. Functionally, may play a role in plant defense. Probably has no oxalate oxidase activity even if the active site is conserved. In Brassica napus (Rape), this protein is Germin-like protein 1 (GER1).